A 414-amino-acid chain; its full sequence is Serine/arginine (SR)-type shuttling mRNA binding protein NPL3 (414 aa).

Basic and acidic residues predominate over residues 1-11 (MSEAQETHVEQ). The interval 1–119 (MSEAQETHVE…GRPPMHHRQE (119 aa)) is disordered. Position 15 is a phosphoserine (S15). Residues 33–51 (DAPQEPQVPQESAPQESAP) show a composition bias toward low complexity. A compositionally biased stretch (pro residues) spans 52–68 (QEPPAPQEQNDVPPPSN). Over residues 75 to 92 (EESHSVQDYQEAHQHHQP) the composition is skewed to basic and acidic residues. S79 carries the post-translational modification Phosphoserine. Residues 93-105 (PEPQPYYPPPPPG) show a composition bias toward pro residues. RRM domains are found at residues 125–195 (TRLF…YSKL) and 200–275 (YRIT…RDDN). A phosphoserine mark is found at S182, S212, and S224. Positions 269 to 299 (TVERDDNPPPIRRSNRGGFRGRGGFRGGFRG) are disordered. Gly residues predominate over residues 286–299 (GFRGRGGFRGGFRG). Dimethylated arginine occurs at positions 288, 290, 294, and 298. Omega-N-methylarginine is present on R302. A dimethylated arginine; alternate mark is found at R307 and R314. Omega-N-methylarginine; alternate is present on residues R307 and R314. Omega-N-methylarginine is present on residues R321, R329, R337, and R344. A disordered region spans residues 343–414 (SRGGYDSPRG…DAPRERSPTR (72 aa)). Residues 346–360 (GYDSPRGGYDSPRGG) show a composition bias toward low complexity. R351 carries the post-translational modification Dimethylated arginine; alternate. R351 carries the post-translational modification Omega-N-methylarginine; alternate. S356 carries the phosphoserine modification. 4 positions are modified to dimethylated arginine; alternate: R358, R363, R377, and R384. Residues R358, R363, R377, and R384 each carry the omega-N-methylarginine; alternate modification. Residues 379–389 (SYGGSRGGYDG) are compositionally biased toward gly residues. Residue R391 is modified to Omega-N-methylarginine. Over residues 399–414 (DAYRTRDAPRERSPTR) the composition is skewed to basic and acidic residues.

It belongs to the RRM GAR family. Interacts with RRP6. Post-translationally, methylated by HMT1. The methylation is required for nuclear export.

It is found in the cytoplasm. It localises to the nucleus. Its subcellular location is the stress granule. Functionally, involved in mRNA processing and export. Required for efficient splicing of a large set of pre-mRNAs by efficient co-transcriptional recruitment of the splicing machinery. Remains associated with the mRNP during early steps of translation elongation. The chain is Serine/arginine (SR)-type shuttling mRNA binding protein NPL3 from Saccharomyces cerevisiae (strain ATCC 204508 / S288c) (Baker's yeast).